A 350-amino-acid chain; its full sequence is Inositol 2-dehydrogenase/D-chiro-inositol 3-dehydrogenase (350 aa).

It belongs to the Gfo/Idh/MocA family. Homotetramer.

The enzyme catalyses myo-inositol + NAD(+) = scyllo-inosose + NADH + H(+). The catalysed reaction is 1D-chiro-inositol + NAD(+) = scyllo-inosine + NADH + H(+). Its pathway is polyol metabolism; myo-inositol degradation into acetyl-CoA; acetyl-CoA from myo-inositol: step 1/7. Functionally, involved in the oxidation of myo-inositol (MI) and D-chiro-inositol (DCI) to 2-keto-myo-inositol (2KMI or 2-inosose) and 1-keto-D-chiro-inositol (1KDCI), respectively. In Lactiplantibacillus plantarum (strain ATCC BAA-793 / NCIMB 8826 / WCFS1) (Lactobacillus plantarum), this protein is Inositol 2-dehydrogenase/D-chiro-inositol 3-dehydrogenase.